Reading from the N-terminus, the 916-residue chain is Chitin synthase B (916 aa).

Disordered stretches follow at residues 1-84 (MAYQ…AGFH) and 114-141 (SPYA…GGGL). Asn18 is a glycosylation site (N-linked (GlcNAc...) asparagine). Over residues 60–75 (RGTSPVRPTSGYSLTE) the composition is skewed to polar residues. N-linked (GlcNAc...) asparagine glycosylation is present at Asn546. A run of 7 helical transmembrane segments spans residues 572–594 (MFFL…FSLA), 628–648 (IINT…FILA), 663–683 (SFVV…YLVV), 715–735 (IIII…FMYL), 743–763 (SFPA…VYAF), 845–865 (LVTL…SDGM), and 884–904 (ALLW…CWFL).

This sequence belongs to the chitin synthase family. Class III subfamily.

Its subcellular location is the cell membrane. The catalysed reaction is [(1-&gt;4)-N-acetyl-beta-D-glucosaminyl](n) + UDP-N-acetyl-alpha-D-glucosamine = [(1-&gt;4)-N-acetyl-beta-D-glucosaminyl](n+1) + UDP + H(+). Its function is as follows. Polymerizes chitin, a structural polymer of the cell wall and septum, by transferring the sugar moiety of UDP-GlcNAc to the non-reducing end of the growing chitin polymer. Involved in hyphal growth and more particularly in branching. This Aspergillus oryzae (strain ATCC 42149 / RIB 40) (Yellow koji mold) protein is Chitin synthase B.